Here is a 356-residue protein sequence, read N- to C-terminus: Protein RecA (356 aa).

77-84 contributes to the ATP binding site; that stretch reads GPESSGKT.

Belongs to the RecA family.

The protein resides in the cytoplasm. Functionally, can catalyze the hydrolysis of ATP in the presence of single-stranded DNA, the ATP-dependent uptake of single-stranded DNA by duplex DNA, and the ATP-dependent hybridization of homologous single-stranded DNAs. It interacts with LexA causing its activation and leading to its autocatalytic cleavage. The protein is Protein RecA of Caulobacter sp. (strain K31).